The sequence spans 140 residues: Nucleoside diphosphate kinase (140 aa).

ATP is bound by residues lysine 11, phenylalanine 59, arginine 87, threonine 93, arginine 104, and asparagine 114. Histidine 117 serves as the catalytic Pros-phosphohistidine intermediate.

Belongs to the NDK family. In terms of assembly, homotetramer. Requires Mg(2+) as cofactor.

It is found in the cytoplasm. It carries out the reaction a 2'-deoxyribonucleoside 5'-diphosphate + ATP = a 2'-deoxyribonucleoside 5'-triphosphate + ADP. The catalysed reaction is a ribonucleoside 5'-diphosphate + ATP = a ribonucleoside 5'-triphosphate + ADP. Its function is as follows. Major role in the synthesis of nucleoside triphosphates other than ATP. The ATP gamma phosphate is transferred to the NDP beta phosphate via a ping-pong mechanism, using a phosphorylated active-site intermediate. The protein is Nucleoside diphosphate kinase of Rhodospirillum centenum (strain ATCC 51521 / SW).